A 124-amino-acid polypeptide reads, in one-letter code: Ragulator complex protein LAMTOR3 (124 aa).

The segment at 57 to 70 (TDQGSKLGLSKNKS) is required for interaction with LAMTOR2.

Belongs to the LAMTOR3 family. Part of the Ragulator complex composed of LAMTOR1, LAMTOR2, LAMTOR3, LAMTOR4 and LAMTOR5. LAMTOR4 and LAMTOR5 form a heterodimer that interacts, through LAMTOR1, with a LAMTOR2, LAMTOR3 heterodimer. The Ragulator complex interacts with both the mTORC1 complex and heterodimers constituted of the Rag GTPases RagA/RRAGA, RagB/RRAGB, RagC/RRAGC and RagD/RRAGD; regulated by amino acid availability. The Ragulator complex interacts with SLC38A9; the probable amino acid sensor. Interacts with LAMTOR1 and LAMTOR2; the interaction is direct. Component of the lysosomal folliculin complex (LFC), composed of FLCN, FNIP1 (or FNIP2), RagA/RRAGA or RagB/RRAGB GDP-bound, RagC/RRAGC or RagD/RRAGD GTP-bound, and Ragulator. Interacts with MAP2K1/MEK1 and MAPK2. Interacts with MORG1.

The protein localises to the late endosome membrane. Functionally, as part of the Ragulator complex it is involved in amino acid sensing and activation of mTORC1, a signaling complex promoting cell growth in response to growth factors, energy levels, and amino acids. Activated by amino acids through a mechanism involving the lysosomal V-ATPase, the Ragulator plays a dual role for the small GTPases Rag (RagA/RRAGA, RagB/RRAGB, RagC/RRAGC and/or RagD/RRAGD): it (1) acts as a guanine nucleotide exchange factor (GEF), activating the small GTPases Rag and (2) mediates recruitment of Rag GTPases to the lysosome membrane. Activated Ragulator and Rag GTPases function as a scaffold recruiting mTORC1 to lysosomes where it is in turn activated. Adapter protein that enhances the efficiency of the MAP kinase cascade facilitating the activation of MAPK2. This chain is Ragulator complex protein LAMTOR3 (Lamtor3), found in Mus musculus (Mouse).